The primary structure comprises 190 residues: MRGLRPALSTFIFLLLITGGVYPLLTTVLGQWWFPWQANGSLIREGDTVRGSALIGQNFTGNGYFQGRPSATAEMPYNPQASGGSNLAVSNPELDKQIAARVAALRAANPDASTNVPVELVTASASGLDNNITPQAAVWQIPRVAKARNLSVEQLTQLIAKYSQQPLVKYIGQPVVNIVELNLALDKLDE.

A helical transmembrane segment spans residues 10–30 (TFIFLLLITGGVYPLLTTVLG).

It belongs to the KdpC family. The system is composed of three essential subunits: KdpA, KdpB and KdpC.

The protein localises to the cell inner membrane. In terms of biological role, part of the high-affinity ATP-driven potassium transport (or Kdp) system, which catalyzes the hydrolysis of ATP coupled with the electrogenic transport of potassium into the cytoplasm. This subunit acts as a catalytic chaperone that increases the ATP-binding affinity of the ATP-hydrolyzing subunit KdpB by the formation of a transient KdpB/KdpC/ATP ternary complex. In Escherichia coli (strain SE11), this protein is Potassium-transporting ATPase KdpC subunit.